A 273-amino-acid chain; its full sequence is Anthranilate synthase beta subunit 2, chloroplastic (273 aa).

The transit peptide at 1-36 directs the protein to the chloroplast; the sequence is MAATTLYNSCLLQPKYGFTTRRLNQSLVNSLTNPTR. The Glutamine amidotransferase type-1 domain occupies 71-270; sequence PIIVIDNYDS…IKLVEKKESE (200 aa). The active-site Nucleophile is Cys149. Residues His244 and Glu246 contribute to the active site.

In terms of assembly, heterotetramer consisting of two non-identical subunits: a beta subunit and a large alpha subunit.

It localises to the plastid. It is found in the chloroplast. The catalysed reaction is chorismate + L-glutamine = anthranilate + pyruvate + L-glutamate + H(+). It functions in the pathway amino-acid biosynthesis; L-tryptophan biosynthesis; L-tryptophan from chorismate: step 1/5. Feedback inhibition by tryptophan. In terms of biological role, part of a heterotetrameric complex that catalyzes the two-step biosynthesis of anthranilate, an intermediate in the biosynthesis of L-tryptophan. In the first step, the glutamine-binding beta subunit of anthranilate synthase (AS) provides the glutamine amidotransferase activity which generates ammonia as a substrate that, along with chorismate, is used in the second step, catalyzed by the large alpha subunit of AS to produce anthranilate. This is Anthranilate synthase beta subunit 2, chloroplastic (ASB2) from Arabidopsis thaliana (Mouse-ear cress).